A 1093-amino-acid polypeptide reads, in one-letter code: NACHT, LRR and PYD domains-containing protein 14 (1093 aa).

The Pyrin domain occupies 1 to 97; the sequence is MADSSSSSFF…CERAKEEINW (97 aa). The disordered stretch occupies residues 102–121; sequence IGPDDAKAGETQEDQEAVLG. In terms of domain architecture, NACHT spans 177–499; that stretch reads QIVVLQGAAG…MFYMLKGSWE (323 aa). An ATP-binding site is contributed by 183–190; the sequence is GAAGVGKT. 11 LRR repeats span residues 730-750, 759-780, 787-807, 816-836, 844-864, 873-894, 901-921, 930-951, 958-978, 987-1008, and 1015-1035; these read NLMH…KSLC, KLQT…NISN, SLIF…QLLC, YLER…EYLS, RLTH…KLMS, TLKS…YLST, SLTH…KLLC, NLQD…DLAS, NLRS…KILC, NIQR…DLSS, and RLIK…VKLY.

The protein belongs to the NLRP family. As to expression, testis-specific.

The protein resides in the cytoplasm. Its function is as follows. May be involved in inflammation and spermatogenesis. This chain is NACHT, LRR and PYD domains-containing protein 14 (NLRP14), found in Homo sapiens (Human).